Here is a 139-residue protein sequence, read N- to C-terminus: Phosphoribosyl-AMP cyclohydrolase (139 aa).

Mg(2+) is bound at residue Asp-95. Residue Cys-96 coordinates Zn(2+). Positions 97 and 99 each coordinate Mg(2+). The Zn(2+) site is built by Cys-114 and Cys-121.

Belongs to the PRA-CH family. As to quaternary structure, homodimer. It depends on Mg(2+) as a cofactor. Zn(2+) is required as a cofactor.

It is found in the cytoplasm. It catalyses the reaction 1-(5-phospho-beta-D-ribosyl)-5'-AMP + H2O = 1-(5-phospho-beta-D-ribosyl)-5-[(5-phospho-beta-D-ribosylamino)methylideneamino]imidazole-4-carboxamide. Its pathway is amino-acid biosynthesis; L-histidine biosynthesis; L-histidine from 5-phospho-alpha-D-ribose 1-diphosphate: step 3/9. In terms of biological role, catalyzes the hydrolysis of the adenine ring of phosphoribosyl-AMP. In Chelativorans sp. (strain BNC1), this protein is Phosphoribosyl-AMP cyclohydrolase.